The primary structure comprises 993 residues: Vinculin (993 aa).

2 repeat units span residues 258-364 and 373-480. Residues 258–480 form a 2 X repeats region; the sequence is DSDNVTVMRK…LRNKLRELVD (223 aa). Positions 730-797 are disordered; sequence ITGAGGSRPP…PPPETDDEEE (68 aa). The segment covering 758-768 has biased composition (basic and acidic residues); that stretch reads VHDRIYIREDI. Positions 769–790 are enriched in pro residues; the sequence is PTPPRPPPPVEISPPPRPPPPP.

Belongs to the vinculin/alpha-catenin family. Exhibits self-association properties.

It is found in the cytoplasm. The protein resides in the cytoskeleton. Its subcellular location is the cell junction. The protein localises to the adherens junction. It localises to the cell membrane. Its function is as follows. Involved in cell adhesion. May be involved in the attachment of the actin-based microfilaments to the plasma membrane. The polypeptide is Vinculin (Brugia malayi (Filarial nematode worm)).